The sequence spans 284 residues: Deoxyribonuclease-1 (284 aa).

An N-terminal signal peptide occupies residues 1-22 (MRAARLMGALLALAGLLQLALS). A glycan (N-linked (GlcNAc...) asparagine) is linked at N40. The active site involves E100. Residues C123 and C126 are joined by a disulfide bond. An N-linked (GlcNAc...) asparagine glycan is attached at N128. H156 is an active-site residue. The cysteines at positions 195 and 231 are disulfide-linked.

Belongs to the DNase I family. Ca(2+) is required as a cofactor. It depends on Mg(2+) as a cofactor.

Its subcellular location is the secreted. The protein resides in the zymogen granule. It is found in the nucleus envelope. It catalyses the reaction Endonucleolytic cleavage to 5'-phosphodinucleotide and 5'-phosphooligonucleotide end-products.. In terms of biological role, serum endocuclease secreted into body fluids by a wide variety of exocrine and endocrine organs. Expressed by non-hematopoietic tissues and preferentially cleaves protein-free DNA. Among other functions, seems to be involved in cell death by apoptosis. Binds specifically to G-actin and blocks actin polymerization. Together with DNASE1L3, plays a key role in degrading neutrophil extracellular traps (NETs). NETs are mainly composed of DNA fibers and are released by neutrophils to bind pathogens during inflammation. Degradation of intravascular NETs by DNASE1 and DNASE1L3 is required to prevent formation of clots that obstruct blood vessels and cause organ damage following inflammation. The chain is Deoxyribonuclease-1 (DNASE1) from Sus scrofa (Pig).